The following is a 182-amino-acid chain: Protein GrpE (182 aa).

The disordered stretch occupies residues 1 to 37; it reads MSDSSKERKKKFTGMVNKQKSEDQQNNSKQADDLDEL.

Belongs to the GrpE family. As to quaternary structure, homodimer.

The protein localises to the cytoplasm. Participates actively in the response to hyperosmotic and heat shock by preventing the aggregation of stress-denatured proteins, in association with DnaK and GrpE. It is the nucleotide exchange factor for DnaK and may function as a thermosensor. Unfolded proteins bind initially to DnaJ; upon interaction with the DnaJ-bound protein, DnaK hydrolyzes its bound ATP, resulting in the formation of a stable complex. GrpE releases ADP from DnaK; ATP binding to DnaK triggers the release of the substrate protein, thus completing the reaction cycle. Several rounds of ATP-dependent interactions between DnaJ, DnaK and GrpE are required for fully efficient folding. This chain is Protein GrpE, found in Wolbachia sp. subsp. Brugia malayi (strain TRS).